Consider the following 316-residue polypeptide: Transaldolase (316 aa).

The Schiff-base intermediate with substrate role is filled by lysine 132.

Belongs to the transaldolase family. Type 1 subfamily. As to quaternary structure, homodimer.

The protein resides in the cytoplasm. The catalysed reaction is D-sedoheptulose 7-phosphate + D-glyceraldehyde 3-phosphate = D-erythrose 4-phosphate + beta-D-fructose 6-phosphate. Its pathway is carbohydrate degradation; pentose phosphate pathway; D-glyceraldehyde 3-phosphate and beta-D-fructose 6-phosphate from D-ribose 5-phosphate and D-xylulose 5-phosphate (non-oxidative stage): step 2/3. Transaldolase is important for the balance of metabolites in the pentose-phosphate pathway. In Vibrio parahaemolyticus serotype O3:K6 (strain RIMD 2210633), this protein is Transaldolase.